The sequence spans 278 residues: Elongation factor Ts (278 aa).

The interval threonine 80–valine 83 is involved in Mg(2+) ion dislocation from EF-Tu.

The protein belongs to the EF-Ts family.

The protein resides in the cytoplasm. In terms of biological role, associates with the EF-Tu.GDP complex and induces the exchange of GDP to GTP. It remains bound to the aminoacyl-tRNA.EF-Tu.GTP complex up to the GTP hydrolysis stage on the ribosome. The sequence is that of Elongation factor Ts from Arthrobacter sp. (strain FB24).